Here is a 398-residue protein sequence, read N- to C-terminus: ATP-dependent (S)-NAD(P)H-hydrate dehydratase 1 (398 aa).

A YjeF C-terminal domain is found at 80 to 391 (LLRKAFQMIP…GYIGEAFELV (312 aa)). Residues Gly-187 and 240–246 (NHVEFQR) each bind (6S)-NADPHX. ATP contacts are provided by residues 280–284 (KGSID) and 300–309 (GSPKRCGGQG). Asp-310 is a (6S)-NADPHX binding site.

It belongs to the NnrD/CARKD family. Mg(2+) is required as a cofactor.

The protein resides in the cytoplasm. The enzyme catalyses (6S)-NADHX + ATP = ADP + phosphate + NADH + H(+). It carries out the reaction (6S)-NADPHX + ATP = ADP + phosphate + NADPH + H(+). Functionally, catalyzes the dehydration of the S-form of NAD(P)HX at the expense of ATP, which is converted to ADP. Together with NAD(P)HX epimerase, which catalyzes the epimerization of the S- and R-forms, the enzyme allows the repair of both epimers of NAD(P)HX, a damaged form of NAD(P)H that is a result of enzymatic or heat-dependent hydration. The protein is ATP-dependent (S)-NAD(P)H-hydrate dehydratase 1 of Puccinia graminis f. sp. tritici (strain CRL 75-36-700-3 / race SCCL) (Black stem rust fungus).